The following is a 175-amino-acid chain: MSSQIRQNYSTDVEAAVNSLVNMYLQASYTYLSLGFYFDRDDVALEGVSHFFRELAEEKREGYERLLKMQNQRGGRALFQDIKKPAEDEWGKTPDAMKAAMALEKKLNQALLDLHALGSAHTDPHLCDFLETHFLDEEVKLIKKMGDHLTNLHRLGGPEAGLGEYLFERLTLKHD.

Ser-2 is modified (N-acetylserine). In terms of domain architecture, Ferritin-like diiron spans 7–156; it reads QNYSTDVEAA…DHLTNLHRLG (150 aa). Fe cation contacts are provided by Glu-54, Glu-57, Glu-58, Glu-61, and Glu-64. The tract at residues 54–61 is catalytic site for iron oxidation; the sequence is ELAEEKRE.

The protein belongs to the ferritin family. Oligomer of 24 subunits. There are two types of subunits: L (light) chain and H (heavy) chain. The major chain can be light or heavy, depending on the species and tissue type. The functional molecule forms a roughly spherical shell with a diameter of 12 nm and contains a central cavity into which the insoluble mineral iron core is deposited. Interacts with NCOA4.

The protein resides in the cytoplasmic vesicle. It is found in the autophagosome. It localises to the cytoplasm. The protein localises to the autolysosome. Its function is as follows. Stores iron in a soluble, non-toxic, readily available form. Important for iron homeostasis. Iron is taken up in the ferrous form and deposited as ferric hydroxides after oxidation. Also plays a role in delivery of iron to cells. Mediates iron uptake in capsule cells of the developing kidney. Delivery to lysosomes by the cargo receptor NCOA4 for autophagic degradation and release or iron. The chain is Ferritin light chain (FTL) from Pongo abelii (Sumatran orangutan).